We begin with the raw amino-acid sequence, 62 residues long: MVNVALLLDQIIATPLRSMVEAQQESANATVEFLTSLIDENGKPKGIELAYEQTVFDPERGL.

The N-terminal stretch at 1–22 (MVNVALLLDQIIATPLRSMVEA) is a signal peptide.

This is an uncharacterized protein from Archaeoglobus fulgidus (strain ATCC 49558 / DSM 4304 / JCM 9628 / NBRC 100126 / VC-16).